A 161-amino-acid polypeptide reads, in one-letter code: 3-hydroxyacyl-[acyl-carrier-protein] dehydratase FabZ (161 aa).

His64 is an active-site residue.

Belongs to the thioester dehydratase family. FabZ subfamily.

The protein resides in the cytoplasm. It catalyses the reaction a (3R)-hydroxyacyl-[ACP] = a (2E)-enoyl-[ACP] + H2O. Its function is as follows. Involved in unsaturated fatty acids biosynthesis. Catalyzes the dehydration of short chain beta-hydroxyacyl-ACPs and long chain saturated and unsaturated beta-hydroxyacyl-ACPs. The polypeptide is 3-hydroxyacyl-[acyl-carrier-protein] dehydratase FabZ (Paramagnetospirillum magneticum (strain ATCC 700264 / AMB-1) (Magnetospirillum magneticum)).